The primary structure comprises 122 residues: Large ribosomal subunit protein uL14 (122 aa).

It belongs to the universal ribosomal protein uL14 family. Part of the 50S ribosomal subunit. Forms a cluster with proteins L3 and L19. In the 70S ribosome, L14 and L19 interact and together make contacts with the 16S rRNA in bridges B5 and B8.

In terms of biological role, binds to 23S rRNA. Forms part of two intersubunit bridges in the 70S ribosome. The sequence is that of Large ribosomal subunit protein uL14 from Nitrosococcus oceani (strain ATCC 19707 / BCRC 17464 / JCM 30415 / NCIMB 11848 / C-107).